The primary structure comprises 245 residues: Probable proteasome subunit alpha type-2 (245 aa).

Belongs to the peptidase T1A family. The 26S proteasome consists of a 20S proteasome core and two 19S regulatory subunits. The 20S proteasome core is composed of 28 subunits that are arranged in four stacked rings, resulting in a barrel-shaped structure. The two end rings are each formed by seven alpha subunits, and the two central rings are each formed by seven beta subunits. The catalytic chamber with the active sites is on the inside of the barrel.

The protein localises to the cytoplasm. Its subcellular location is the nucleus. Functionally, the proteasome is a multicatalytic proteinase complex which is characterized by its ability to cleave peptides with Arg, Phe, Tyr, Leu, and Glu adjacent to the leaving group at neutral or slightly basic pH. The proteasome has an ATP-dependent proteolytic activity. The polypeptide is Probable proteasome subunit alpha type-2 (pre8) (Schizosaccharomyces pombe (strain 972 / ATCC 24843) (Fission yeast)).